Here is a 118-residue protein sequence, read N- to C-terminus: Melanoma antigen recognized by T-cells 1 (118 aa).

A helical transmembrane segment spans residues 27 to 47 (AAGIGILTVILGVLLLIGCWY). Residues 48-118 (CRRRNGYRAL…AEQSPPPYSP (71 aa)) lie on the Cytoplasmic side of the membrane. The segment at 78–118 (GFDHRDSKVSLQEKNCEPVVPNAPPAYEKLSAEQSPPPYSP) is disordered. Residue S108 is modified to Phosphoserine.

In terms of assembly, interacts with PMEL. Interacts with GPR143. Post-translationally, acylated. As to expression, expression is restricted to melanoma and melanocyte cell lines and retina.

It is found in the endoplasmic reticulum membrane. The protein resides in the golgi apparatus. It localises to the trans-Golgi network membrane. The protein localises to the melanosome. Involved in melanosome biogenesis by ensuring the stability of GPR143. Plays a vital role in the expression, stability, trafficking, and processing of melanocyte protein PMEL, which is critical to the formation of stage II melanosomes. The chain is Melanoma antigen recognized by T-cells 1 (MLANA) from Homo sapiens (Human).